Reading from the N-terminus, the 291-residue chain is GTPase Era (291 aa).

An Era-type G domain is found at 2–167; it reads KSGFVSIIGR…LDEIVKYLDE (166 aa). The tract at residues 10-17 is G1; the sequence is GRTNAGKS. GTP is bound at residue 10 to 17; it reads GRTNAGKS. Residues 36–40 are G2; sequence NATRR. Residues 57-60 are G3; it reads DTPG. Residues 57-61 and 116-119 each bind GTP; these read DTPGL and NKVD. The tract at residues 116–119 is G4; sequence NKVD. Positions 146-148 are G5; sequence YSS. The KH type-2 domain maps to 186–274; that stretch reads YRDFILESIY…LLKLFVTVKK (89 aa).

This sequence belongs to the TRAFAC class TrmE-Era-EngA-EngB-Septin-like GTPase superfamily. Era GTPase family. In terms of assembly, monomer.

It is found in the cytoplasm. The protein resides in the cell inner membrane. In terms of biological role, an essential GTPase that binds both GDP and GTP, with rapid nucleotide exchange. Plays a role in 16S rRNA processing and 30S ribosomal subunit biogenesis and possibly also in cell cycle regulation and energy metabolism. The chain is GTPase Era from Campylobacter jejuni (strain RM1221).